The sequence spans 157 residues: MIINSIIEFLQAADIKKQILGIDFGEKKVGVAISNIEHTVAMPLQTIFATNQDRINKIQEIAVAYNIGAIVIGLPFKLDGTETSQTHRVKDFANKLANKLLLPIFLCDERLTSKAANNLLKMGNIKRKVRNAIDDRVAASIILEGTLKRMQNSKSYF.

Belongs to the YqgF nuclease family.

It localises to the cytoplasm. Its function is as follows. Could be a nuclease involved in processing of the 5'-end of pre-16S rRNA. The chain is Putative pre-16S rRNA nuclease from Orientia tsutsugamushi (strain Ikeda) (Rickettsia tsutsugamushi).